The primary structure comprises 176 residues: Ribosome maturation factor RimM (176 aa).

Residues 100–172 form the PRC barrel domain; it reads PDTYYDHQLV…IVEIDPPHGL (73 aa).

It belongs to the RimM family. Binds ribosomal protein uS19.

The protein resides in the cytoplasm. An accessory protein needed during the final step in the assembly of 30S ribosomal subunit, possibly for assembly of the head region. Essential for efficient processing of 16S rRNA. May be needed both before and after RbfA during the maturation of 16S rRNA. It has affinity for free ribosomal 30S subunits but not for 70S ribosomes. The polypeptide is Ribosome maturation factor RimM (Mycobacterium bovis (strain ATCC BAA-935 / AF2122/97)).